The following is a 79-amino-acid chain: MKSCKATKIEAVLTMDSKGQILLPKELRERAGLKAGDRLVAIAGCDENEEVCCLILVKAELVDEEMRSIIAPMLKGVVG.

The SpoVT-AbrB domain occupies 10-60; that stretch reads EAVLTMDSKGQILLPKELRERAGLKAGDRLVAIAGCDENEEVCCLILVKAE.

This is an uncharacterized protein from Archaeoglobus fulgidus (strain ATCC 49558 / DSM 4304 / JCM 9628 / NBRC 100126 / VC-16).